A 285-amino-acid chain; its full sequence is Phosphatidylglycerol--prolipoprotein diacylglyceryl transferase (285 aa).

Transmembrane regions (helical) follow at residues 26-46, 71-91, 107-127, and 133-153; these read IALHWYGLGYVVGILFSWWYV, FVVWAALGIVVGGRLGQVLIW, WDGGMSFHGGLIGTTIAIIWF, and INIWAMFDTIAAGAPFGIGVV. A 1,2-diacyl-sn-glycero-3-phospho-(1'-sn-glycerol) is bound at residue R154. A run of 3 helical transmembrane segments spans residues 194–214, 218–238, and 256–276; these read LMEGFLLFIVLAFIIFAFKAF, GTVAGTFIISYGIARTISEIF, and GFTYGMALSLPMILFGFYAIF.

The protein belongs to the Lgt family.

It localises to the cell inner membrane. The enzyme catalyses L-cysteinyl-[prolipoprotein] + a 1,2-diacyl-sn-glycero-3-phospho-(1'-sn-glycerol) = an S-1,2-diacyl-sn-glyceryl-L-cysteinyl-[prolipoprotein] + sn-glycerol 1-phosphate + H(+). The protein operates within protein modification; lipoprotein biosynthesis (diacylglyceryl transfer). Its function is as follows. Catalyzes the transfer of the diacylglyceryl group from phosphatidylglycerol to the sulfhydryl group of the N-terminal cysteine of a prolipoprotein, the first step in the formation of mature lipoproteins. This is Phosphatidylglycerol--prolipoprotein diacylglyceryl transferase from Bartonella bacilliformis (strain ATCC 35685 / KC583 / Herrer 020/F12,63).